Reading from the N-terminus, the 215-residue chain is Guanylate kinase (215 aa).

The Guanylate kinase-like domain maps to 11-189 (GNVFMVVAPS…ALTELVQIIS (179 aa)). 18–25 (APSGAGKS) contacts ATP.

Belongs to the guanylate kinase family.

Its subcellular location is the cytoplasm. It carries out the reaction GMP + ATP = GDP + ADP. Its function is as follows. Essential for recycling GMP and indirectly, cGMP. The chain is Guanylate kinase from Bordetella bronchiseptica (strain ATCC BAA-588 / NCTC 13252 / RB50) (Alcaligenes bronchisepticus).